The primary structure comprises 470 residues: L-fuculokinase (470 aa).

It belongs to the FGGY kinase family. Requires a divalent metal cation as cofactor.

The catalysed reaction is L-fuculose + ATP = L-fuculose 1-phosphate + ADP + H(+). It functions in the pathway carbohydrate degradation; L-fucose degradation; L-lactaldehyde and glycerone phosphate from L-fucose: step 2/3. Catalyzes the phosphorylation of L-fuculose. The polypeptide is L-fuculokinase (Haemophilus influenzae (strain ATCC 51907 / DSM 11121 / KW20 / Rd)).